Reading from the N-terminus, the 357-residue chain is Glucose-6-phosphatase catalytic subunit 1 (357 aa).

Residues 1-28 (MEKGMDVLHDFGIQSTHYLQVNYQDSQD) are Lumenal-facing. A helical membrane pass occupies residues 29-49 (WFILVSVIADLRNAFYVLFPI). The Cytoplasmic portion of the chain corresponds to 50-60 (WFHLREAVGIK). The helical transmembrane segment at 61–81 (LLWVAVIGDWLNLVFKWILFG) threads the bilayer. Over 82-117 (QRPYWWVMDTDYYSNTSVPLIKQFPVTCETGPGSPS) the chain is Lumenal. A substrate-binding site is contributed by Arg-83. N-linked (GlcNAc...) asparagine glycosylation occurs at Asn-96. A helical membrane pass occupies residues 118–138 (GHAMGTAGVYYVMVTSTLSIF). Catalysis depends on His-119, which acts as the Proton donor. Residues 139–147 (RGRKRPTYR) lie on the Cytoplasmic side of the membrane. A helical transmembrane segment spans residues 148–168 (FRCLNILLWLGFWAVQLNVCL). The Lumenal portion of the chain corresponds to 169 to 170 (SR). Position 170 (Arg-170) interacts with substrate. The chain crosses the membrane as a helical span at residues 171-191 (IYLAAHFPHQVVAGVLSGIAV). Residue His-176 is the Nucleophile of the active site. Over 192 to 209 (AETFRHIQSIYNASLKKY) the chain is Cytoplasmic. A helical membrane pass occupies residues 210–230 (FLITFFLFSFAIGFYLLLKGL). Topologically, residues 231–254 (GVDLLWTLEKARRWCERPEWVHID) are lumenal. A helical membrane pass occupies residues 255 to 275 (TTPFASLLKNVGTLFGLGVTL). Residues 276–291 (NSSMYRESCKGKLSKW) are Cytoplasmic-facing. A helical transmembrane segment spans residues 292–312 (FPFRLSCIVVSLILLHLFDSL). At 313-320 (KPPSQTEL) the chain is on the lumenal side. A helical transmembrane segment spans residues 321 to 341 (IFYTLSFCKSAAVPLASVSLI). Over 342 to 357 (PYCLARVFDQPDKKSL) the chain is Cytoplasmic. Positions 354-357 (KKSL) match the Prevents secretion from ER motif.

This sequence belongs to the glucose-6-phosphatase family.

The protein resides in the endoplasmic reticulum membrane. It catalyses the reaction D-glucose 6-phosphate + H2O = D-glucose + phosphate. Its pathway is carbohydrate biosynthesis; gluconeogenesis. In terms of biological role, hydrolyzes glucose-6-phosphate to glucose in the endoplasmic reticulum. Forms with the glucose-6-phosphate transporter (SLC37A4/G6PT) the complex responsible for glucose production in the terminal step of glycogenolysis and gluconeogenesis. Hence, it is the key enzyme in homeostatic regulation of blood glucose levels. The chain is Glucose-6-phosphatase catalytic subunit 1 (G6PC1) from Canis lupus familiaris (Dog).